Consider the following 453-residue polypeptide: MDWKDVLRRRLASPNSDPKRKKSEQELKDEEMDLFTKYYSEWKGGRKNTNEFYKTIPRFYYRLPAEDEVLLQKLREESRAVFLQRKSRELLDNEELQNLWFLLDKHQIPPMIGEEAMINYENFLKVGEKAGPKCKQFFTAKVFAKLLHTDSYGRVSIMQFFNYVMRKVWLHQTRIGLSLYDVAGQGYLRESDLENYILELIPTLPQLDGLEKSFYSFYVCTAVRKFFFFLDPLRTGKIKIQDILACSFLDDLLELRDEELSKESQETNWFSAPSALRVYGQYLNLDKDHNGMLSKEELSRYGTATMTNVFLDRVFQECLTYDGEMDYKTYLDFVLALENRKEPAALQYIFKLLDIENKGYLNVFSLNYFFRAIQELMKIHGQDPVSFQDVKDEIFDMVKPKDPLKISLQDLINSNQGDTVTTILIDLNGFWTYENREALVANDNENSADLDDT.

The segment at 1-27 is disordered; sequence MDWKDVLRRRLASPNSDPKRKKSEQEL. EF-hand domains lie at 273–308 and 341–376; these read PSAL…TMTN and KEPA…IQEL. Residues D286, D288, N290, M292, and E297 each coordinate Ca(2+).

Interacts with MCM3AP/GANP, PPP5C, and the phosphatase 2A core enzyme composed of the PPP2CA catalytic subunit and the constant regulatory subunit PPP2R1A. Finds in a complex with ABCB1, TFPI2 and PPP2R3C; leading to the dephosphorylation of ABCB1.

The protein resides in the nucleus. Its subcellular location is the cytoplasm. Its function is as follows. May regulate MCM3AP phosphorylation through phosphatase recruitment. May act as a negative regulator of ABCB1 expression and function through the dephosphorylation of ABCB1 by TFPI2/PPP2R3C complex. May play a role in the activation-induced cell death of B-cells. This chain is Serine/threonine-protein phosphatase 2A regulatory subunit B'' subunit gamma (Ppp2r3c), found in Rattus norvegicus (Rat).